A 112-amino-acid chain; its full sequence is MGFRVLVLVVMATTSALPFTFFEEPGRSPFRPALRSEEAQALRHGLTLLLARRADGQPPDMRQPEMRRPEVRQLEFAELSVGQRRWDVDQCMYYCLTGVVGYSYTECQTMCT.

Residues 1–22 (MGFRVLVLVVMATTSALPFTFF) form the signal peptide. The propeptide occupies 23–85 (EEPGRSPFRP…FAELSVGQRR (63 aa)). Intrachain disulfides connect C91–C111 and C95–C107.

This sequence belongs to the conotoxin R superfamily. As to expression, expressed by the venom duct.

Its subcellular location is the secreted. In Conus villepinii (Villepin's cone), this protein is Conotoxin vil14.4.